The chain runs to 865 residues: Prominin-1 (865 aa).

The signal sequence occupies residues 1–19 (MALVLGSLLLLGLCGNSFS). Topologically, residues 20-108 (GGQPSSTDAP…GLKIVYYEAG (89 aa)) are extracellular. A helical membrane pass occupies residues 109–129 (IILCCVLGLLFIILMPLVGYF). At 130 to 157 (FCMCRCCNKCGGEMHQRQKENGPFLRKC) the chain is on the cytoplasmic side. A helical transmembrane segment spans residues 158-178 (FAISLLVICIIISIGIFYGFV). Topologically, residues 179-433 (ANHQVRTRIK…LPTLEEYDSY (255 aa)) are extracellular. Asparagine 220 carries an N-linked (GlcNAc...) asparagine glycan. Residues lysine 225, lysine 257, and lysine 264 each carry the N6-acetyllysine modification. Asparagine 274, asparagine 395, and asparagine 414 each carry an N-linked (GlcNAc...) asparagine glycan. A helical membrane pass occupies residues 434–454 (WWLGGLVICSLLTLIVIFYYL). Residues 455–486 (GLLCGVCGYDRHATPTTRGCVSNTGGVFLMVG) are Cytoplasmic-facing. Residues 487–507 (VGLSFLFCWILMIIVVLTFVF) form a helical membrane-spanning segment. Topologically, residues 508–792 (GANVEKLICE…LCSYIIDPLN (285 aa)) are extracellular. N-linked (GlcNAc...) asparagine glycosylation is found at asparagine 548, asparagine 580, asparagine 729, and asparagine 730. The helical transmembrane segment at 793–813 (LFWFGIGKATVFLLPALIFAV) threads the bilayer. Over 814 to 865 (KLAKYYRRMDSEDVYDDVETIPMKNMENGNNGYHKDHVYGIHNPVMTSPSQH) the chain is Cytoplasmic. The residue at position 863 (serine 863) is a Phosphoserine.

Belongs to the prominin family. In terms of assembly, interacts with CDHR1 and with actin filaments. Interacts with NAT8 and NAT8B. In terms of processing, isoform 1 and isoform 2 are glycosylated. Acetylation at Lys-225, Lys-257 and Lys-264 by NAT8 and NAT8B may control PROM1 protein expression and its function in cell apoptosis. In terms of tissue distribution, isoform 1 is selectively expressed on CD34 hematopoietic stem and progenitor cells in adult and fetal bone marrow, fetal liver, cord blood and adult peripheral blood. Isoform 1 is not detected on other blood cells. Isoform 1 is also expressed in a number of non-lymphoid tissues including retina, pancreas, placenta, kidney, liver, lung, brain and heart. Found in saliva within small membrane particles. Isoform 2 is predominantly expressed in fetal liver, skeletal muscle, kidney, and heart as well as adult pancreas, kidney, liver, lung, and placenta. Isoform 2 is highly expressed in fetal liver, low in bone marrow, and barely detectable in peripheral blood. Isoform 2 is expressed on hematopoietic stem cells and in epidermal basal cells (at protein level). Expressed in adult retina by rod and cone photoreceptor cells (at protein level).

The protein localises to the apical cell membrane. It is found in the cell projection. The protein resides in the microvillus membrane. Its subcellular location is the cilium. It localises to the photoreceptor outer segment. The protein localises to the endoplasmic reticulum. It is found in the endoplasmic reticulum-Golgi intermediate compartment. Functionally, may play a role in cell differentiation, proliferation and apoptosis. Binds cholesterol in cholesterol-containing plasma membrane microdomains and may play a role in the organization of the apical plasma membrane in epithelial cells. During early retinal development acts as a key regulator of disk morphogenesis. Involved in regulation of MAPK and Akt signaling pathways. In neuroblastoma cells suppresses cell differentiation such as neurite outgrowth in a RET-dependent manner. This Homo sapiens (Human) protein is Prominin-1 (PROM1).